The primary structure comprises 79 residues: MEMTQAVLYIAGALMMGLGALGAAVGIGVLGGRFLEGAARQPELIPMLRTQFFIVMGLVDAVPMIAVGLAMYVLFAVAG.

2 helical membrane passes run 10-30 (IAGA…IGVL) and 52-72 (FFIV…LAMY).

It belongs to the ATPase C chain family. As to quaternary structure, F-type ATPases have 2 components, F(1) - the catalytic core - and F(0) - the membrane proton channel. F(1) has five subunits: alpha(3), beta(3), gamma(1), delta(1), epsilon(1). F(0) has three main subunits: a(1), b(2) and c(10-14). The alpha and beta chains form an alternating ring which encloses part of the gamma chain. F(1) is attached to F(0) by a central stalk formed by the gamma and epsilon chains, while a peripheral stalk is formed by the delta and b chains.

It localises to the cell inner membrane. Functionally, f(1)F(0) ATP synthase produces ATP from ADP in the presence of a proton or sodium gradient. F-type ATPases consist of two structural domains, F(1) containing the extramembraneous catalytic core and F(0) containing the membrane proton channel, linked together by a central stalk and a peripheral stalk. During catalysis, ATP synthesis in the catalytic domain of F(1) is coupled via a rotary mechanism of the central stalk subunits to proton translocation. Key component of the F(0) channel; it plays a direct role in translocation across the membrane. A homomeric c-ring of between 10-14 subunits forms the central stalk rotor element with the F(1) delta and epsilon subunits. This is ATP synthase subunit c from Thiobacillus denitrificans (strain ATCC 25259 / T1).